A 470-amino-acid chain; its full sequence is Membrane-bound lytic murein transglycosylase F (470 aa).

The N-terminal stretch at 1–24 (MPSLKTKGAAGKFASLLLVLALSA) is a signal peptide. The interval 25-262 (CSRPAPPPET…RALERYFGHV (238 aa)) is non-LT domain. The segment at 263–470 (KRLGSSDILG…RGEDGLPPPG (208 aa)) is LT domain. Glutamate 309 is a catalytic residue.

In the N-terminal section; belongs to the bacterial solute-binding protein 3 family. This sequence in the C-terminal section; belongs to the transglycosylase Slt family.

It localises to the cell outer membrane. It carries out the reaction Exolytic cleavage of the (1-&gt;4)-beta-glycosidic linkage between N-acetylmuramic acid (MurNAc) and N-acetylglucosamine (GlcNAc) residues in peptidoglycan, from either the reducing or the non-reducing ends of the peptidoglycan chains, with concomitant formation of a 1,6-anhydrobond in the MurNAc residue.. Functionally, murein-degrading enzyme that degrades murein glycan strands and insoluble, high-molecular weight murein sacculi, with the concomitant formation of a 1,6-anhydromuramoyl product. Lytic transglycosylases (LTs) play an integral role in the metabolism of the peptidoglycan (PG) sacculus. Their lytic action creates space within the PG sacculus to allow for its expansion as well as for the insertion of various structures such as secretion systems and flagella. The sequence is that of Membrane-bound lytic murein transglycosylase F from Thiobacillus denitrificans (strain ATCC 25259 / T1).